Reading from the N-terminus, the 269-residue chain is Phosphoribosylformylglycinamidine synthase subunit PurQ (269 aa).

In terms of domain architecture, Glutamine amidotransferase type-1 spans 5 to 262; it reads VLVMSGYGIN…IESNLQIFKN (258 aa). Cys-95 acts as the Nucleophile in catalysis. Residues His-222, Glu-224, and Glu-232 contribute to the active site.

In terms of assembly, part of the FGAM synthase complex composed of 1 PurL, 1 PurQ and 2 PurS subunits.

The protein localises to the cytoplasm. The enzyme catalyses N(2)-formyl-N(1)-(5-phospho-beta-D-ribosyl)glycinamide + L-glutamine + ATP + H2O = 2-formamido-N(1)-(5-O-phospho-beta-D-ribosyl)acetamidine + L-glutamate + ADP + phosphate + H(+). It catalyses the reaction L-glutamine + H2O = L-glutamate + NH4(+). It functions in the pathway purine metabolism; IMP biosynthesis via de novo pathway; 5-amino-1-(5-phospho-D-ribosyl)imidazole from N(2)-formyl-N(1)-(5-phospho-D-ribosyl)glycinamide: step 1/2. Functionally, part of the phosphoribosylformylglycinamidine synthase complex involved in the purines biosynthetic pathway. Catalyzes the ATP-dependent conversion of formylglycinamide ribonucleotide (FGAR) and glutamine to yield formylglycinamidine ribonucleotide (FGAM) and glutamate. The FGAM synthase complex is composed of three subunits. PurQ produces an ammonia molecule by converting glutamine to glutamate. PurL transfers the ammonia molecule to FGAR to form FGAM in an ATP-dependent manner. PurS interacts with PurQ and PurL and is thought to assist in the transfer of the ammonia molecule from PurQ to PurL. The protein is Phosphoribosylformylglycinamidine synthase subunit PurQ of Methanococcus maripaludis (strain C5 / ATCC BAA-1333).